Consider the following 73-residue polypeptide: ATP synthase subunit 9, mitochondrial (73 aa).

Helical transmembrane passes span 12–32 (VAALGLIGAGIGVGIVFAALI) and 50–70 (ILGFALSEATGLFALMVSFLL).

It belongs to the ATPase C chain family. F-type ATPases have 2 components, CF(1) - the catalytic core - and CF(0) - the membrane proton channel. CF(1) has five subunits: alpha(3), beta(3), gamma(1), delta(1), epsilon(1). CF(0) has three main subunits: a, b and c.

The protein resides in the mitochondrion inner membrane. Mitochondrial membrane ATP synthase (F(1)F(0) ATP synthase or Complex V) produces ATP from ADP in the presence of a proton gradient across the membrane which is generated by electron transport complexes of the respiratory chain. F-type ATPases consist of two structural domains, F(1) - containing the extramembraneous catalytic core and F(0) - containing the membrane proton channel, linked together by a central stalk and a peripheral stalk. During catalysis, ATP synthesis in the catalytic domain of F(1) is coupled via a rotary mechanism of the central stalk subunits to proton translocation. Part of the complex F(0) domain. A homomeric c-ring of probably 10 subunits is part of the complex rotary element. In Mycosarcoma maydis (Corn smut fungus), this protein is ATP synthase subunit 9, mitochondrial (ATP9).